A 181-amino-acid chain; its full sequence is ADP-ribosylation factor 3 (181 aa).

A lipid anchor (N-myristoyl glycine) is attached at glycine 2. Residues 24 to 31 (GLDAAGKT), 67 to 71 (DVGGQ), and 126 to 129 (NKQD) each bind GTP.

Belongs to the small GTPase superfamily. Arf family. In terms of assembly, interacts with PRKCABP. Interacts with PI4KB and NCS1/FREQ at the Golgi complex.

The protein resides in the golgi apparatus. It localises to the cytoplasm. It is found in the perinuclear region. In terms of biological role, GTP-binding protein that functions as an allosteric activator of the cholera toxin catalytic subunit, an ADP-ribosyltransferase. Involved in protein trafficking; may modulate vesicle budding and uncoating within the Golgi apparatus. The chain is ADP-ribosylation factor 3 (ARF3) from Bos taurus (Bovine).